Here is a 366-residue protein sequence, read N- to C-terminus: Phospho-N-acetylmuramoyl-pentapeptide-transferase (366 aa).

10 helical membrane passes run 27–47 (AALF…ISSL), 71–91 (TPTM…LLWA), 93–113 (LSSI…AIGF), 134–154 (LGIE…AAQS), 174–194 (LMLN…VGAG), 205–225 (GLAI…AYLA), 245–265 (LAVI…FNAP), 268–288 (AIFM…TVAV), 297–317 (VIIG…VFWF), and 343–363 (QVVI…LSTL).

The protein belongs to the glycosyltransferase 4 family. MraY subfamily. It depends on Mg(2+) as a cofactor.

The protein resides in the cell inner membrane. The enzyme catalyses UDP-N-acetyl-alpha-D-muramoyl-L-alanyl-gamma-D-glutamyl-meso-2,6-diaminopimeloyl-D-alanyl-D-alanine + di-trans,octa-cis-undecaprenyl phosphate = di-trans,octa-cis-undecaprenyl diphospho-N-acetyl-alpha-D-muramoyl-L-alanyl-D-glutamyl-meso-2,6-diaminopimeloyl-D-alanyl-D-alanine + UMP. It functions in the pathway cell wall biogenesis; peptidoglycan biosynthesis. Its function is as follows. Catalyzes the initial step of the lipid cycle reactions in the biosynthesis of the cell wall peptidoglycan: transfers peptidoglycan precursor phospho-MurNAc-pentapeptide from UDP-MurNAc-pentapeptide onto the lipid carrier undecaprenyl phosphate, yielding undecaprenyl-pyrophosphoryl-MurNAc-pentapeptide, known as lipid I. The chain is Phospho-N-acetylmuramoyl-pentapeptide-transferase from Sinorhizobium fredii (strain NBRC 101917 / NGR234).